A 220-amino-acid chain; its full sequence is Germin-like protein subfamily T member 2 (220 aa).

The signal sequence occupies residues 1-27; sequence MTTLQISSSLFRSFLLVICVFVIPSLS. Cysteines 37 and 52 form a disulfide. A Cupin type-1 domain is found at 64-212; that stretch reads SGLGGPLNTS…TFRTDDVTVN (149 aa). Asn71 is a glycosylation site (N-linked (GlcNAc...) asparagine). Positions 112, 114, and 119 each coordinate Mn(2+). Asn136 carries an N-linked (GlcNAc...) asparagine glycan. His158 contacts Mn(2+).

It belongs to the germin family. In terms of assembly, oligomer (believed to be a pentamer but probably hexamer).

It is found in the secreted. The protein resides in the extracellular space. Its subcellular location is the apoplast. In terms of biological role, may play a role in plant defense. Probably has no oxalate oxidase activity even if the active site is conserved. The protein is Germin-like protein subfamily T member 2 of Arabidopsis thaliana (Mouse-ear cress).